The sequence spans 211 residues: V-type ATP synthase subunit D (211 aa).

Belongs to the V-ATPase D subunit family.

Its function is as follows. Produces ATP from ADP in the presence of a proton gradient across the membrane. The chain is V-type ATP synthase subunit D from Fusobacterium nucleatum subsp. nucleatum (strain ATCC 25586 / DSM 15643 / BCRC 10681 / CIP 101130 / JCM 8532 / KCTC 2640 / LMG 13131 / VPI 4355).